The sequence spans 524 residues: 2-isopropylmalate synthase (524 aa).

Residues 15–275 (VVVFDTTMRD…PYGTSVDPVH (261 aa)) enclose the Pyruvate carboxyltransferase domain. 4 residues coordinate Mn(2+): Asp-24, His-212, His-214, and Asn-248. Residues 401–524 (RVSRLRVVAG…RPEAAIASGF (124 aa)) form a regulatory domain region.

The protein belongs to the alpha-IPM synthase/homocitrate synthase family. LeuA type 1 subfamily. In terms of assembly, homodimer. The cofactor is Mn(2+).

It is found in the cytoplasm. The enzyme catalyses 3-methyl-2-oxobutanoate + acetyl-CoA + H2O = (2S)-2-isopropylmalate + CoA + H(+). Its pathway is amino-acid biosynthesis; L-leucine biosynthesis; L-leucine from 3-methyl-2-oxobutanoate: step 1/4. In terms of biological role, catalyzes the condensation of the acetyl group of acetyl-CoA with 3-methyl-2-oxobutanoate (2-ketoisovalerate) to form 3-carboxy-3-hydroxy-4-methylpentanoate (2-isopropylmalate). This is 2-isopropylmalate synthase from Caulobacter vibrioides (strain ATCC 19089 / CIP 103742 / CB 15) (Caulobacter crescentus).